We begin with the raw amino-acid sequence, 396 residues long: Acetate kinase (396 aa).

Asparagine 7 is a Mg(2+) binding site. Lysine 14 contributes to the ATP binding site. Arginine 88 lines the substrate pocket. The active-site Proton donor/acceptor is the aspartate 145. Residues 205–209, 279–281, and 327–331 each bind ATP; these read HLGNG, DFR, and GIGEN. Glutamate 381 contributes to the Mg(2+) binding site.

Belongs to the acetokinase family. As to quaternary structure, homodimer. Mg(2+) is required as a cofactor. The cofactor is Mn(2+).

It localises to the cytoplasm. It carries out the reaction acetate + ATP = acetyl phosphate + ADP. The protein operates within metabolic intermediate biosynthesis; acetyl-CoA biosynthesis; acetyl-CoA from acetate: step 1/2. Its function is as follows. Catalyzes the formation of acetyl phosphate from acetate and ATP. Can also catalyze the reverse reaction. The polypeptide is Acetate kinase (Campylobacter jejuni subsp. doylei (strain ATCC BAA-1458 / RM4099 / 269.97)).